The chain runs to 124 residues: Large ribosomal subunit protein bL19 (124 aa).

This sequence belongs to the bacterial ribosomal protein bL19 family.

This protein is located at the 30S-50S ribosomal subunit interface and may play a role in the structure and function of the aminoacyl-tRNA binding site. The sequence is that of Large ribosomal subunit protein bL19 from Orientia tsutsugamushi (strain Ikeda) (Rickettsia tsutsugamushi).